A 224-amino-acid chain; its full sequence is MAFYPLQIAGLVLGFLGMVGTLATTLLPQWRVSAFVGSNIIVFERLWEGLWMNCIRQARVRLQCKFYSSLLALPPALETARALMCVAVALSLIALLIGICGMKQVQCTGSNERAKAYLLGTSGVLFILTGIFVLIPVSWTANIIIRDFYNPAIHIGQKRELGAALFLGWASAAVLFIGGGLLCGFCCCNRKKQGYRYPVPGYRVPHTDKRRNTTMLSKTSTSYV.

Over 1 to 7 the chain is Cytoplasmic; the sequence is MAFYPLQ. Residues 8 to 28 traverse the membrane as a helical segment; that stretch reads IAGLVLGFLGMVGTLATTLLP. Topologically, residues 29-81 are extracellular; the sequence is QWRVSAFVGSNIIVFERLWEGLWMNCIRQARVRLQCKFYSSLLALPPALETAR. The helical transmembrane segment at 82-102 threads the bilayer; the sequence is ALMCVAVALSLIALLIGICGM. The Cytoplasmic segment spans residues 103-124; that stretch reads KQVQCTGSNERAKAYLLGTSGV. Residues 125–145 traverse the membrane as a helical segment; sequence LFILTGIFVLIPVSWTANIII. Residues 146-164 are Extracellular-facing; that stretch reads RDFYNPAIHIGQKRELGAA. A helical transmembrane segment spans residues 165–185; it reads LFLGWASAAVLFIGGGLLCGF. Residues 186–224 are Cytoplasmic-facing; sequence CCCNRKKQGYRYPVPGYRVPHTDKRRNTTMLSKTSTSYV.

This sequence belongs to the claudin family. As to quaternary structure, cannot form tight junction strands on its own. Interacts with OCLN. In terms of tissue distribution, in the kidney, expressed in the proximal tubule and in the Henle's loop. In the distal convoluted tubule, not expressed in all tubules. Not detected in the collecting duct (at protein level).

The protein resides in the cell junction. It is found in the tight junction. Its subcellular location is the basolateral cell membrane. It carries out the reaction chloride(in) = chloride(out). It catalyses the reaction hydrogencarbonate(in) = hydrogencarbonate(out). The enzyme catalyses bromide(in) = bromide(out). The catalysed reaction is iodide(out) = iodide(in). It carries out the reaction fluoride(in) = fluoride(out). It catalyses the reaction nitrate(in) = nitrate(out). The enzyme catalyses thiocyanate(in) = thiocyanate(out). In terms of biological role, channel-forming tight junction protein with selectivity for anions, including chloride and hydrogencarbonate, and for solutes smaller than 9 Angstrom in diameter. In the kidney proximal tubule, may be involved in paracellular reabsorption of filtered anions. Does not affect water permeability. The sequence is that of Claudin-17 (CLDN17) from Homo sapiens (Human).